Here is a 582-residue protein sequence, read N- to C-terminus: Fructose-1,6-bisphosphatase class 3 (582 aa).

Belongs to the FBPase class 3 family. It depends on Mn(2+) as a cofactor.

It catalyses the reaction beta-D-fructose 1,6-bisphosphate + H2O = beta-D-fructose 6-phosphate + phosphate. It functions in the pathway carbohydrate biosynthesis; gluconeogenesis. This is Fructose-1,6-bisphosphatase class 3 from Saccharophagus degradans (strain 2-40 / ATCC 43961 / DSM 17024).